The sequence spans 84 residues: Cell division topological specificity factor (84 aa).

This sequence belongs to the MinE family.

Its function is as follows. Prevents the cell division inhibition by proteins MinC and MinD at internal division sites while permitting inhibition at polar sites. This ensures cell division at the proper site by restricting the formation of a division septum at the midpoint of the long axis of the cell. In Burkholderia ambifaria (strain MC40-6), this protein is Cell division topological specificity factor.